The chain runs to 341 residues: Uroporphyrinogen decarboxylase (341 aa).

Substrate contacts are provided by residues Arg-23–Arg-27, Asp-73, Tyr-147, Ser-202, and His-318.

Belongs to the uroporphyrinogen decarboxylase family. In terms of assembly, homodimer.

The protein resides in the cytoplasm. It catalyses the reaction uroporphyrinogen III + 4 H(+) = coproporphyrinogen III + 4 CO2. Its pathway is porphyrin-containing compound metabolism; protoporphyrin-IX biosynthesis; coproporphyrinogen-III from 5-aminolevulinate: step 4/4. In terms of biological role, catalyzes the decarboxylation of four acetate groups of uroporphyrinogen-III to yield coproporphyrinogen-III. The protein is Uroporphyrinogen decarboxylase of Novosphingobium aromaticivorans (strain ATCC 700278 / DSM 12444 / CCUG 56034 / CIP 105152 / NBRC 16084 / F199).